Reading from the N-terminus, the 298-residue chain is Transcription factor BOA (298 aa).

3 disordered regions span residues 1–26 (MGKEVMVSDYGDDDGEDAGGGDEYRI), 79–143 (LRSS…KRPR), and 206–232 (EDPYSSSDQLFSSTPVPPQSFQDGGGS). The span at 10-20 (YGDDDGEDAGG) shows a compositional bias: acidic residues. The span at 104-113 (DPKKQKKSDG) shows a compositional bias: basic and acidic residues. The segment covering 122–131 (STAEEGDSGP) has biased composition (acidic residues). The myb-like GARP DNA-binding region spans 138-197 (TSKRPRLVWTPQLHKRFVDVVAHLGIKNAVPKTIMQLMNVEGLTRENVASHLQKYRLYLK). Residues 209–227 (YSSSDQLFSSTPVPPQSFQ) show a composition bias toward polar residues.

It is found in the nucleus. In terms of biological role, transcription factor that is a critical component of the regulatory circuit of the circadian clock. Binds to specific sites on CCA1 promoter leading to CCA1 activation. Is required for the rhythmic expression of other clock genes such as LHY, GI and APRR1/TOC1. In Arabidopsis thaliana (Mouse-ear cress), this protein is Transcription factor BOA (BOA).